The following is a 259-amino-acid chain: Protein odd-skipped-related 1 (259 aa).

3 C2H2-type zinc fingers span residues 168 to 190 (FVCK…ERTH), 196 to 218 (YTCD…RYIH), and 224 to 246 (FKCQ…KTLH).

It belongs to the Odd C2H2-type zinc-finger protein family. As to expression, at early gastrula stage, expressed in the involuting mesoderm and endoderm. During neurulation, expressed in the pronephric primordium, following expression of osr2. During tailbud (stage 35), expressed in the rectal diverticulum and in the kidney ducts.

The protein localises to the nucleus. Transcriptional repressor. Required for pronephric kidney development. This is Protein odd-skipped-related 1 from Xenopus laevis (African clawed frog).